A 162-amino-acid polypeptide reads, in one-letter code: MSETQVTWLTQDAFDRLKSELDELVGNRPVIAAKINEAREEGDLKENGGYHAAREEQGHLESRIRQLQELLRTAKVGDVPTEAGVAKPGSVLTVRYDDEDETEKFLLATREEGAHGDLEVYSPSSPLGQALLDAKEGETREYELPNGGTMKVTLVKAEPFTG.

Positions 50 to 75 form a coiled coil; the sequence is YHAAREEQGHLESRIRQLQELLRTAK.

It belongs to the GreA/GreB family.

Functionally, necessary for efficient RNA polymerase transcription elongation past template-encoded arresting sites. The arresting sites in DNA have the property of trapping a certain fraction of elongating RNA polymerases that pass through, resulting in locked ternary complexes. Cleavage of the nascent transcript by cleavage factors such as GreA or GreB allows the resumption of elongation from the new 3'terminus. GreA releases sequences of 2 to 3 nucleotides. In Saccharopolyspora erythraea (strain ATCC 11635 / DSM 40517 / JCM 4748 / NBRC 13426 / NCIMB 8594 / NRRL 2338), this protein is Transcription elongation factor GreA.